The following is a 397-amino-acid chain: Acetate kinase 1 (397 aa).

Mg(2+) is bound at residue asparagine 8. Position 15 (lysine 15) interacts with ATP. Residue arginine 89 participates in substrate binding. Aspartate 146 (proton donor/acceptor) is an active-site residue. ATP-binding positions include 206 to 210 (HLGNG), 281 to 283 (DLR), and 329 to 333 (GIGEN). A Mg(2+)-binding site is contributed by glutamate 382.

The protein belongs to the acetokinase family. As to quaternary structure, homodimer. Requires Mg(2+) as cofactor. Mn(2+) serves as cofactor.

Its subcellular location is the cytoplasm. It catalyses the reaction acetate + ATP = acetyl phosphate + ADP. It functions in the pathway metabolic intermediate biosynthesis; acetyl-CoA biosynthesis; acetyl-CoA from acetate: step 1/2. Functionally, catalyzes the formation of acetyl phosphate from acetate and ATP. Can also catalyze the reverse reaction. The protein is Acetate kinase 1 of Listeria innocua serovar 6a (strain ATCC BAA-680 / CLIP 11262).